A 684-amino-acid chain; its full sequence is Threonine--tRNA ligase (684 aa).

The region spanning 1–66 (MTVPATDSCP…DTDAEVVPVA (66 aa)) is the TGS domain. The interval 261–567 (DHRKLGSELD…LTEHYAGAFP (307 aa)) is catalytic. Positions 366, 417, and 544 each coordinate Zn(2+).

This sequence belongs to the class-II aminoacyl-tRNA synthetase family. As to quaternary structure, homodimer. It depends on Zn(2+) as a cofactor.

The protein resides in the cytoplasm. The catalysed reaction is tRNA(Thr) + L-threonine + ATP = L-threonyl-tRNA(Thr) + AMP + diphosphate + H(+). Its function is as follows. Catalyzes the attachment of threonine to tRNA(Thr) in a two-step reaction: L-threonine is first activated by ATP to form Thr-AMP and then transferred to the acceptor end of tRNA(Thr). Also edits incorrectly charged L-seryl-tRNA(Thr). The protein is Threonine--tRNA ligase of Mycolicibacterium paratuberculosis (strain ATCC BAA-968 / K-10) (Mycobacterium paratuberculosis).